The primary structure comprises 206 residues: Small ribosomal subunit protein uS4 (206 aa).

The S4 RNA-binding domain occupies 96–156 (QRLDNVVYRM…EKAKKQARIV (61 aa)).

It belongs to the universal ribosomal protein uS4 family. Part of the 30S ribosomal subunit. Contacts protein S5. The interaction surface between S4 and S5 is involved in control of translational fidelity.

Its function is as follows. One of the primary rRNA binding proteins, it binds directly to 16S rRNA where it nucleates assembly of the body of the 30S subunit. With S5 and S12 plays an important role in translational accuracy. The sequence is that of Small ribosomal subunit protein uS4 from Alteromonas mediterranea (strain DSM 17117 / CIP 110805 / LMG 28347 / Deep ecotype).